The sequence spans 278 residues: S-formylglutathione hydrolase YeiG (278 aa).

Active-site charge relay system residues include serine 145, aspartate 223, and histidine 256.

Belongs to the esterase D family.

It carries out the reaction S-formylglutathione + H2O = formate + glutathione + H(+). Functionally, serine hydrolase involved in the detoxification of formaldehyde. Hydrolyzes S-formylglutathione to glutathione and formate. The chain is S-formylglutathione hydrolase YeiG (yeiG) from Shigella boydii serotype 4 (strain Sb227).